The chain runs to 482 residues: Probable F-box protein At1g30780 (482 aa).

In terms of domain architecture, F-box spans 230–280; it reads EIDLDSLPFDLKMVILTRLSAKSLTNFKRVSKMWSSIIGSQRFIDSFFTMS.

In Arabidopsis thaliana (Mouse-ear cress), this protein is Probable F-box protein At1g30780.